The chain runs to 248 residues: Probable phosphatase VCM66_A0854 (248 aa).

The Zn(2+) site is built by histidine 8, histidine 10, histidine 16, histidine 41, glutamate 74, histidine 102, histidine 132, aspartate 194, and histidine 196.

This sequence belongs to the PHP family. Zn(2+) serves as cofactor.

The sequence is that of Probable phosphatase VCM66_A0854 from Vibrio cholerae serotype O1 (strain M66-2).